The chain runs to 1775 residues: MRNSFPPSDGGRSATDRRQQSSHSSSTNRYNSRSAQSSPPLNHRPTWNQQHSQYPNSNFPPNYRRDRNPSSGYSPPVTRARPNFIVQLLHPAAANSDTKLCFSTKKQEIESLALLCEIPEESIHVPQFGCIAGSFSFRQWVDARSAVVALWDYRLQGKHEFVPELIPNVIVPSDMNELKDRLRDLFSSHILSLMENGEGVKKVRLEIEEKSRQVVSFSSKRGLKFEVFEKKKAIEAERDLVVNRLEEFNNAMKSILRYLIGQDGYEFDLDDEEEGDVAVFCLEGAYDWRRIHCLIRRECRRLEDGLPIYAYRRQILKKIHREQIMVLIGETGSGKSTQLVQFLADSGVAASESIVCTQPRKIAAMTLADRVREESSGCYEENTVSCTPTFSSTEEISSKVVYMTDNCLLQHYMKDRSLSGISCVIIDEAHERSLNTDLLLALLKKLLSRRIDLRLVIMSATADAKQLSQYFFSCGILLVNGRNFPVEIVYSPSDTEENSVVGGIASYVGDVVKMAVEIHKTEKEGTILAFLTSQAEVEWACERFITPSAIALPLHGKLSFEEQFRVFQNHPGRRKVIFATNIAETSLTIPGVKYVIDSGMVKESKYEPRTGMSILKVCRVSQSSARQRAGRAGRTEPGRCYRLYSKNDFDSMNLNQEPEIRRVHLGVALLRMLALGVNNIAEFNFVDAPVPEAIAMAVQNLVQLGAVVEKNGVHELTQEGHCLVKLGLEPKLGKLILGCFRHRMGKEGIVLAAVMANASSIFCRVGNFDDKMKADRLKVQFCNQNGDLFTLLSVYKEWASLPRERRNKWCWENSLNAKSMRRCEDTVKELEICIERELTLVSPSYWVWNPNEGTKHDKHLKMVILASLAENVAMYTGYNQLGYEVALTGQQVQLHPSCSLLAFGQKPSWVVFGELLSIVDQYLVCVTACDFEALYMLDPPPPFDVSQMDERRLRIKKVVGCSSTVLKRFCGKSNRSLLSIVSRARSLCSDERIGIQVDVDQNEIRLYAPPLDMEKVSALVNDALECEKKWMHNECLEKYLYHGRGQVPIALFGSGAQIKHLEVDQRFLTVDVLYYGDDVVDDRELLTFLEKKIDGSICSIYKFAANKQDCDEKEKWGRITFLTPESAMKATEIQKFYFKGSVLKLFPSLSTGGGIFKMPYFSSVTAKIRWPRRESSGRGCLKCPSGDIHRILGDISSLEIGTNYVHIQRDQQSNDSILISGLGDLSEAEVLDVLEFRTQRRDLNFFIFRKKYSVQCPSPTACEEELHKRIFARMSAKNPEPNCVQVQVFEPKEDNYFMRALIKFDGRLHFEAAKALQELNGEVLPGCLPWQKIKCEQLFQSSIICSASIYNTVKRQLNVLLARFERQKGGECCLEPTHNGAYRVKITAYATRPVAEMRRELEELLRGRPINHPGFTRRVLQHLMSRDGINLMRKIQQETETYILLDRHNLTVRICGTSEKIAKAEQELIQALMDYHESKQLEIHLRGPEIRPDLMKEVVKRFGPELQGIKEKVHGVDLKLNTRYHVIQVHGSKEMRQEVQKMVNELAREKSALGEKPDEIEVECPICLSEVDDGYSLEGCSHLFCKACLLEQFEASMRNFDAFPILCSHIDCGAPIVLADMRALLSQEKLDELFSASLSSFVTSSDGKFRFCSTPDCPSVYRVAGPQESGEPFICGACHSEICTRCHLEYHPLITCERYKKFKENPDLSLKDWAKGKNVKECPICKSTIEKTDGCNHMKCRCGKHICWTCLDVFTQEEPCYAHLRTIHGGIGLVE.

The transit peptide at 1–33 (MRNSFPPSDGGRSATDRRQQSSHSSSTNRYNSR) directs the protein to the chloroplast. Residues 1-77 (MRNSFPPSDG…NPSSGYSPPV (77 aa)) are disordered. A compositionally biased stretch (low complexity) spans 21–34 (SSHSSSTNRYNSRS). Over residues 35 to 60 (AQSSPPLNHRPTWNQQHSQYPNSNFP) the composition is skewed to polar residues. The Helicase ATP-binding domain occupies 316–480 (LKKIHREQIM…FFSCGILLVN (165 aa)). Residue 329-336 (GETGSGKS) participates in ATP binding. Positions 427–430 (DEAH) match the DEAH box motif. Residues 510-676 (DVVKMAVEIH…VALLRMLALG (167 aa)) enclose the Helicase C-terminal domain. Positions 1560-1767 (IEVECPICLS…EPCYAHLRTI (208 aa)) are TRIAD supradomain. Zn(2+)-binding residues include C1564, C1567, C1580, H1582, C1585, C1588, C1607, C1612, C1652, C1657, C1675, C1678, C1683, C1686, H1691, C1696, C1722, and C1725. Residues 1564–1612 (CPICLSEVDDGYSLEGCSHLFCKACLLEQFEASMRNFDAFPILCSHIDC) form an RING-type 1 zinc finger. The segment at 1631–1696 (DELFSASLSS…HLEYHPLITC (66 aa)) adopts an IBR-type zinc-finger fold. Residues 1722–1750 (CPICKSTIEKTDGCNHMKCRCGKHICWTC) form an RING-type 2; atypical zinc finger. C1735 is a catalytic residue. Zn(2+) is bound by residues C1740 and C1742.

Belongs to the DEAD box helicase family. DEAH subfamily.

It is found in the plastid. Its subcellular location is the chloroplast. It carries out the reaction ATP + H2O = ADP + phosphate + H(+). The sequence is that of ATP-dependent RNA helicase DEAH12, chloroplastic from Arabidopsis thaliana (Mouse-ear cress).